The primary structure comprises 221 residues: Iron-sulfur cluster repair protein YtfE (221 aa).

Belongs to the RIC family. YtfE subfamily. In terms of assembly, homodimer.

The protein resides in the cytoplasm. In terms of biological role, di-iron-containing protein involved in the repair of iron-sulfur clusters damaged by oxidative and nitrosative stress conditions. The sequence is that of Iron-sulfur cluster repair protein YtfE from Edwardsiella ictaluri (strain 93-146).